The primary structure comprises 448 residues: Exodeoxyribonuclease 7 large subunit (448 aa).

It belongs to the XseA family. As to quaternary structure, heterooligomer composed of large and small subunits.

It is found in the cytoplasm. Its subcellular location is the nucleoid. It catalyses the reaction Exonucleolytic cleavage in either 5'- to 3'- or 3'- to 5'-direction to yield nucleoside 5'-phosphates.. Its function is as follows. Bidirectionally degrades single-stranded DNA into large acid-insoluble oligonucleotides, which are then degraded further into small acid-soluble oligonucleotides. The chain is Exodeoxyribonuclease 7 large subunit from Bacillus subtilis (strain 168).